A 287-amino-acid polypeptide reads, in one-letter code: MANLKSIKKRIVSVKNTRQITKAMKMVSAAKLRRAQENVVAARPYAGKLAEVLERLAKTQESDASPLMVKRDTRRALLVVVTSDRGLCGGFNANLSKAAERFINERKGEFSELSLMTIGRKGYEFLRNRHTVRKHHGNIFSTLSYQTAALIAAELVEGYLAEDYDEVYVIYNAFKSVMTQDITLEQLLPVTPKAGDDDEVGTEYIYEPSKAALLDELLPKHIEVQVFKSLLESVASEHGARMTAMDSASKNATEMIGKLTLIYNRARQAAITTELMEIISGSESIKG.

The protein belongs to the ATPase gamma chain family. As to quaternary structure, F-type ATPases have 2 components, CF(1) - the catalytic core - and CF(0) - the membrane proton channel. CF(1) has five subunits: alpha(3), beta(3), gamma(1), delta(1), epsilon(1). CF(0) has three main subunits: a, b and c.

The protein resides in the cell inner membrane. Its function is as follows. Produces ATP from ADP in the presence of a proton gradient across the membrane. The gamma chain is believed to be important in regulating ATPase activity and the flow of protons through the CF(0) complex. This is ATP synthase gamma chain from Geobacter sp. (strain M21).